Consider the following 770-residue polypeptide: uncharacterized protein (770 aa).

Residues 1-24 (MVSAAWLRYPSLLTLGILVSRVAA) form the signal peptide. N-linked (GlcNAc...) asparagine glycosylation is found at asparagine 78, asparagine 204, asparagine 533, and asparagine 638. The interval 746 to 770 (SWGTGQNDVPPSLGAGIKRDGLRFT) is disordered.

The protein belongs to the glycosyl hydrolase 92 family.

The protein localises to the secreted. This is an uncharacterized protein from Arthroderma benhamiae (strain ATCC MYA-4681 / CBS 112371) (Trichophyton mentagrophytes).